The primary structure comprises 376 residues: UDP-N-acetylglucosamine 2-epimerase (376 aa).

Substrate-binding positions include Arg10, Lys15, Asp95, Glu117, His213, Gln271, Phe276, 290–292 (SGG), Glu296, and Arg313.

Belongs to the UDP-N-acetylglucosamine 2-epimerase family. In terms of assembly, homodimer.

It localises to the cytoplasm. The enzyme catalyses UDP-N-acetyl-alpha-D-glucosamine = UDP-N-acetyl-alpha-D-mannosamine. The protein operates within bacterial outer membrane biogenesis; enterobacterial common antigen biosynthesis. Catalyzes the reversible epimerization at C-2 of UDP-N-acetylglucosamine (UDP-GlcNAc) and thereby provides bacteria with UDP-N-acetylmannosamine (UDP-ManNAc), the activated donor of ManNAc residues. This chain is UDP-N-acetylglucosamine 2-epimerase, found in Salmonella typhimurium (strain LT2 / SGSC1412 / ATCC 700720).